Reading from the N-terminus, the 623-residue chain is Alpha-1,2-mannosyltransferase Alg9 (623 aa).

A run of 8 helical transmembrane segments spans residues 152–172, 193–223, 229–254, 266–284, 326–348, 360–378, 390–410, and 431–452; these read LIFYMVRCMLGFGCAVMERYM, LFSVGMFVSSTALLPSSFSMYFGCAALAAWW, FAIFLTAISALLGWPFAALIGIPLVL, FVQWTLISGATVAIPMIAI, FLNFNIIWLLALQLPIMLVIDYL, FPHYISLAPLYLWLLVFFA, IYPLISLCGAITVDVYQRIFF, and FIAILVMVTSTLLGLSRVFALY.

It belongs to the glycosyltransferase 22 family.

The protein localises to the endoplasmic reticulum membrane. The enzyme catalyses an alpha-D-Man-(1-&gt;2)-alpha-D-Man-(1-&gt;2)-alpha-D-Man-(1-&gt;3)-[alpha-D-Man-(1-&gt;3)-alpha-D-Man-(1-&gt;6)]-beta-D-Man-(1-&gt;4)-beta-D-GlcNAc-(1-&gt;4)-alpha-D-GlcNAc-diphospho-di-trans,poly-cis-dolichol + a di-trans,poly-cis-dolichyl beta-D-mannosyl phosphate = an alpha-D-Man-(1-&gt;2)-alpha-D-Man-(1-&gt;2)-alpha-D-Man-(1-&gt;3)-[alpha-D-Man-(1-&gt;2)-alpha-D-Man-(1-&gt;3)-alpha-D-Man-(1-&gt;6)]-beta-D-Man-(1-&gt;4)-beta-D-GlcNAc-(1-&gt;4)-alpha-D-GlcNAc-diphospho-di-trans,poly-cis-dolichol + a di-trans,poly-cis-dolichyl phosphate + H(+). The catalysed reaction is an alpha-D-Man-(1-&gt;2)-alpha-D-Man-(1-&gt;2)-alpha-D-Man-(1-&gt;3)-[alpha-D-Man-(1-&gt;2)-alpha-D-Man-(1-&gt;3)-[alpha-D-Man-(1-&gt;6)]-alpha-D-Man-(1-&gt;6)]-beta-D-Man-(1-&gt;4)-beta-D-GlcNAc-(1-&gt;4)-alpha-D-GlcNAc-diphospho-di-trans,poly-cis-dolichol + a di-trans,poly-cis-dolichyl beta-D-mannosyl phosphate = an alpha-D-Man-(1-&gt;2)-alpha-D-Man-(1-&gt;2)-alpha-D-Man-(1-&gt;3)-[alpha-D-Man-(1-&gt;2)-alpha-D-Man-(1-&gt;3)-[alpha-D-Man-(1-&gt;2)-alpha-D-Man-(1-&gt;6)]-alpha-D-Man-(1-&gt;6)]-beta-D-Man-(1-&gt;4)-beta-D-GlcNAc-(1-&gt;4)-alpha-D-GlcNAc-diphospho-di-trans,poly-cis-dolichol + a di-trans,poly-cis-dolichyl phosphate + H(+). The protein operates within protein modification; protein glycosylation. In terms of biological role, probable alpha-1,2-mannosyltransferase involved in the N-glycosylation pathway. Probably involved in glycosylation of the TNF receptor grnd, regulating its ligand affinity. Required for normal epithelial growth and architecture. Suppressor of JNK-dependent intestinal stem cell proliferation. This is Alpha-1,2-mannosyltransferase Alg9 from Drosophila melanogaster (Fruit fly).